The following is a 692-amino-acid chain: Elongation factor G (692 aa).

In terms of domain architecture, tr-type G spans 8 to 283 (KNTRNIGIMA…AVLDYLPSPV (276 aa)). Residues 17–24 (AHIDAGKT), 81–85 (DTPGH), and 135–138 (NKMD) each bind GTP.

It belongs to the TRAFAC class translation factor GTPase superfamily. Classic translation factor GTPase family. EF-G/EF-2 subfamily.

It is found in the cytoplasm. Its function is as follows. Catalyzes the GTP-dependent ribosomal translocation step during translation elongation. During this step, the ribosome changes from the pre-translocational (PRE) to the post-translocational (POST) state as the newly formed A-site-bound peptidyl-tRNA and P-site-bound deacylated tRNA move to the P and E sites, respectively. Catalyzes the coordinated movement of the two tRNA molecules, the mRNA and conformational changes in the ribosome. The protein is Elongation factor G of Exiguobacterium sibiricum (strain DSM 17290 / CCUG 55495 / CIP 109462 / JCM 13490 / 255-15).